A 254-amino-acid chain; its full sequence is Mediator of RNA polymerase II transcription subunit 4 (254 aa).

Positions 72–114 form a coiled coil; sequence RVHQEMQSLEKEVEKRDSDIQQLQKQLKEAEHILATAVYQAKE. The interval 215-254 is disordered; that stretch reads ILPPHHGNDFGLEPPGHNKENEDDVEAMSTDSSSSSSDSD. Residues 243 to 254 are compositionally biased toward low complexity; that stretch reads STDSSSSSSDSD.

It belongs to the Mediator complex subunit 4 family. In terms of assembly, component of the Mediator complex.

Its subcellular location is the nucleus. Its function is as follows. Component of the Mediator complex, a coactivator involved in the regulated transcription of nearly all RNA polymerase II-dependent genes. Mediator functions as a bridge to convey information from gene-specific regulatory proteins to the basal RNA polymerase II transcription machinery. Mediator is recruited to promoters by direct interactions with regulatory proteins and serves as a scaffold for the assembly of a functional preinitiation complex with RNA polymerase II and the general transcription factors. This chain is Mediator of RNA polymerase II transcription subunit 4 (med4), found in Danio rerio (Zebrafish).